The following is a 200-amino-acid chain: Casparian strip membrane protein 2 (200 aa).

The Cytoplasmic segment spans residues 1–37 (MMKSDSVAIDVPESSSVAKRKAPFMANIRDENGGYKK). A helical transmembrane segment spans residues 38–58 (GLAIFDFILRLGAIAAALGAA). Over 59 to 88 (STMGTSDETLPFFTQFFQFNAGYDDFPTFQ) the chain is Extracellular. Residues 89–109 (FFVIAMAMVAGYLVLSLPFSI) traverse the membrane as a helical segment. Residues 110–121 (VSICRPHAAGPR) lie on the Cytoplasmic side of the membrane. Residues 122–142 (ILLFILDTVALTLNAAAGAAA) traverse the membrane as a helical segment. At 143 to 175 (ADIVYLAHNGNQTTNWLAICLQFGDFCREVSGS) the chain is on the extracellular side. N-linked (GlcNAc...) asparagine glycosylation occurs at Asn153. The helical transmembrane segment at 176-196 (VVASFASVVILMVLVVMSGLA) threads the bilayer. Residues 197–200 (LRRY) are Cytoplasmic-facing.

This sequence belongs to the Casparian strip membrane proteins (CASP) family. As to quaternary structure, homodimer and heterodimers.

Its subcellular location is the cell membrane. Regulates membrane-cell wall junctions and localized cell wall deposition. Required for establishment of the Casparian strip membrane domain (CSD) and the subsequent formation of Casparian strips, a cell wall modification of the root endodermis that determines an apoplastic barrier between the intraorganismal apoplasm and the extraorganismal apoplasm and prevents lateral diffusion. The chain is Casparian strip membrane protein 2 from Ricinus communis (Castor bean).